The following is a 179-amino-acid chain: Peptide deformylase (179 aa).

Fe cation is bound by residues Cys102 and His144. Glu145 is an active-site residue. Position 148 (His148) interacts with Fe cation.

The protein belongs to the polypeptide deformylase family. Fe(2+) serves as cofactor.

It carries out the reaction N-terminal N-formyl-L-methionyl-[peptide] + H2O = N-terminal L-methionyl-[peptide] + formate. In terms of biological role, removes the formyl group from the N-terminal Met of newly synthesized proteins. Requires at least a dipeptide for an efficient rate of reaction. N-terminal L-methionine is a prerequisite for activity but the enzyme has broad specificity at other positions. The polypeptide is Peptide deformylase (Wolbachia pipientis subsp. Culex pipiens (strain wPip)).